A 502-amino-acid polypeptide reads, in one-letter code: Xylulose kinase (502 aa).

82-83 (MH) is a substrate binding site. Aspartate 240 serves as the catalytic Proton acceptor.

It belongs to the FGGY kinase family.

It catalyses the reaction D-xylulose + ATP = D-xylulose 5-phosphate + ADP + H(+). In terms of biological role, catalyzes the phosphorylation of D-xylulose to D-xylulose 5-phosphate. This Levilactobacillus brevis (Lactobacillus brevis) protein is Xylulose kinase.